We begin with the raw amino-acid sequence, 514 residues long: Ras-GEF domain-containing family member 1B-A (514 aa).

Residues 76-206 (HDNNLISGSL…MTQTLIRKLT (131 aa)) form the N-terminal Ras-GEF domain. One can recognise a Ras-GEF domain in the interval 246–494 (DPFTLAQQLT…YLASYESEGP (249 aa)).

In terms of tissue distribution, detected in oocytes, and in embryos at 4 to 120 hours post-fertilization (hpf). Detected along marginal blastomeres at early epiboly stage and throughout the margin at the onset of gastrulation. At 60% epiboly, strongest expression is found in the dorsal shield region and is restricted to the epiblast. Detected in the anterior border of the presomitic mesoderm at the end of epiboly. Detected in adaxial cells, in the somites and in the nervous system during somitogenesis. Detected in diencephalon and hindbrain and in cells surrounding the notochord, including adaxial cells and ventral mesendoderm, in 15-somite stage embryos. At 48 hpf, detected mainly in the brain.

Its function is as follows. Guanine nucleotide exchange factor (GEF) for Ras family proteins (in vitro). The polypeptide is Ras-GEF domain-containing family member 1B-A (rasgef1ba) (Danio rerio (Zebrafish)).